A 1125-amino-acid polypeptide reads, in one-letter code: Transient receptor potential cation channel subfamily A member 1 (1125 aa).

The Cytoplasmic segment spans residues 1–721 (MKRGLRRILL…KWCAYGFRAH (721 aa)). 9 ANK repeats span residues 63-94 (ENLCPLHHAAAEGQVELMELIINGSSCEVLNI), 98-127 (YGNTPLHCAAEKNQVESVKFLLSQGANPNL), 131-161 (NMMSPLHIAVHGMYNEVIKVLTEHKATNINL), 165-194 (NGNTALMSTCAKDNSEALQILLEKGAKLCK), 198-227 (WGDYPVHQAAFSGAKKCMELILAYGEKNGY), 239-268 (KKASPLHLAVQSGDLDMIKMCLDNGAHIDM), 272-301 (AKCMALHFAATQGATDIVKLMISSYTGSSD), 309-338 (NQETLLHRASLFDHHDLAEYLISVGADINS), and 342-371 (EGRSPLILATASASWNIVNLLLCKGAKVDI). 5 cysteine pairs are disulfide-bonded: cysteine 193-cysteine 666, cysteine 463-cysteine 666, cysteine 609-cysteine 622, cysteine 622-cysteine 666, and cysteine 634-cysteine 859. The residue at position 395 (proline 395) is a 4-hydroxyproline; transient. 5 ANK repeats span residues 413-442 (DGCTPLHYACRQGVPVSVNNLLGFNVSIHS), 446-475 (DKKSPLHFAASYGRINTCQRLLQDISDTRL), 482-511 (HGMTPLHLAAKNGHDKVVQLLLKKGALFLS), 514-543 (NGWTALHHASMGGYTQTMKVILDTNLKCTD), and 548-577 (EGNTALHFAAREGHAKAVAMLLSYNADILL). 2 residues coordinate (E)-cinnamaldehyde: cysteine 415 and cysteine 422. Position 622 (cysteine 622) interacts with (E)-cinnamaldehyde. Residue cysteine 634 is modified to Cysteine sulfenic acid (-SOH); transient; in hyperoxia. 3 residues coordinate (E)-cinnamaldehyde: cysteine 642, cysteine 666, and lysine 712. A helical transmembrane segment spans residues 722-742 (MMNLGSYCLGLIPMTLLVVKI). The Extracellular segment spans residues 743–767 (QPGMAFNSTGIINGTSSTHEERIDT). 2 N-linked (GlcNAc...) asparagine glycosylation sites follow: asparagine 749 and asparagine 755. A helical membrane pass occupies residues 768–788 (LNSFPIKICMILVFLSSIFGY). Over 789–806 (CKEVIQIFQQKRNYFLDY) the chain is Cytoplasmic. Residues glutamate 791, glutamine 794, asparagine 808, and glutamate 811 each contribute to the Ca(2+) site. The helical transmembrane segment at 807–827 (NNALEWVIYTTSIIFVLPLFL) threads the bilayer. The Extracellular portion of the chain corresponds to 828–832 (NIPAY). The helical transmembrane segment at 833-853 (MQWQCGAIAIFFYWMNFLLYL) threads the bilayer. Over 854–876 (QRFENCGIFIVMLEVIFKTLLRS) the chain is Cytoplasmic. Position 859 is a cysteine sulfenic acid (-SOH); transient; in hyperoxia (cysteine 859). A helical membrane pass occupies residues 877–897 (TGVFIFLLLAFGLSFYVLLNF). Topologically, residues 898-904 (QDAFSTP) are extracellular. Residues 905-925 (LLSLIQTFSMMLGDINYRDAF) constitute an intramembrane region (pore-forming). Topologically, residues 926–937 (LEPLFRNELAYP) are extracellular. The chain crosses the membrane as a helical span at residues 938–959 (VLTFGQLIAFTMFVPIVLMNLL). Topologically, residues 960-1125 (IGLAVGDIAE…THCSISHPDF (166 aa)) are cytoplasmic. Residues 1044–1073 (MEILKQKYRLKDLTSLLEKQHELIKLIIQK) adopt a coiled-coil conformation. 1048 to 1054 (KQKYRLK) is an a 1,2-diacyl-sn-glycero-3-phospho-(1D-myo-inositol) binding site.

It belongs to the transient receptor (TC 1.A.4) family. Homotetramer. Interacts with TMEM100. Interacts with EGLN1. Interacts with the scorpion wasabi receptor toxin at the same site that electrophiles but in a non-covalent manner. TRPA1 activation by electrophiles occurs though covalent modification of specific cysteine residues in the N-terminal cytoplasmic domain. Post-translationally, hydroxylation is required for TRPA1 activity inhibition in normoxia. In hypoxia, the decrease in oxygen concentration diminishes the activity of the hydroxylase EGLN1, thus relieving TRPA1 from inhibition and ultimately leading to channel activation. In terms of processing, oxidation of Cys-634 and Cys-859 in hyperoxia may override the hydroxylase EGLN1-mediated inhibition, causing TRPA1 activation. In terms of tissue distribution, expressed in inner ear (at protein level). Specifically expressed in a subset of nociceptive neurons. Expressed in the same neurons that TRPV1. In contrast, it is not expressed in neurons expressing TRPM8. Expressed in the superior cervical ganglion of vagus nerve. Expressed in the inferior ganglion (nodose ganglion) of vagus nerve. Expressed in dorsal root ganglia neurons.

The protein localises to the cell membrane. It catalyses the reaction Ca(2+)(in) = Ca(2+)(out). The enzyme catalyses Mg(2+)(in) = Mg(2+)(out). It carries out the reaction Na(+)(in) = Na(+)(out). The catalysed reaction is K(+)(in) = K(+)(out). It catalyses the reaction Zn(2+)(in) = Zn(2+)(out). Its activity is regulated as follows. Electrophilic ligands activate the channel by covalent modification of intracellular cysteines. Cys-622 plays a key role in covalent binding of electrophiles. Extracellular Ca(2+) both potentiates and inactivates TRPA1; a rapid potentiation follows by slow desensitization. Activated by increase in intracellular Ca(2+) concentration. Inhibited by the potent blocker of TRPV channels ruthenium red, A-967079. Activated by icilin, sulfhydryl reactive agent MTSEA, N-methyl maleimide (NMM), and PF-4840154. Also activated by hyperoxia. Activated by intracellular Zn(2+). TRPA1 activation may critically depend on the presence of small intracellular compounds such as polyphosphates. In terms of biological role, ligand-activated Ca(2+)-permeable, nonselective cation channel. Involved in pain detection and possibly also in cold perception, oxygen concentration perception, cough, itch, and inner ear function. Has a relatively high Ca(2+) selectivity, with a preference for divalent over monovalent cations (Ca(2+) &gt; Ba(2+) &gt; Mg(2+) &gt; NH4(+) &gt; Li(+) &gt; K(+)), the influx of cation into the cytoplasm, leads to membrane depolarization. Has a central role in the pain response to endogenous inflammatory mediators, such as bradykinin and to a diverse array of irritants. Activated by a large variety of structurally unrelated electrophilic and non-electrophilic chemical compounds, such as allylthiocyanate (AITC) from mustard oil or wasabi, cinnamaldehyde, diallyl disulfide (DADS) from garlic, and acrolein, an environmental irritant. Electrophilic ligands activate TRPA1 by interacting with critical N-terminal Cys residues in a covalent manner. Non-electrophile agonists bind at distinct sites in the transmembrane domain to promote channel activation. Also acts as an ionotropic cannabinoid receptor by being activated by delta(9)-tetrahydrocannabinol (THC), the psychoactive component of marijuana. May be a component for the mechanosensitive transduction channel of hair cells in inner ear, thereby participating in the perception of sounds. The protein is Transient receptor potential cation channel subfamily A member 1 of Mus musculus (Mouse).